The sequence spans 80 residues: Crustacean hyperglycemic hormones (80 aa).

3 disulfides stabilise this stretch: Cys13–Cys49, Cys29–Cys45, and Cys32–Cys58. At Val78 the chain carries Valine amide.

This sequence belongs to the arthropod CHH/MIH/GIH/VIH hormone family. Produced by the medulla terminalis X-organ in the eyestalks and transported to the sinus gland where they are stored and released.

The protein resides in the secreted. Its function is as follows. Hormone found in the sinus gland of isopods and decapods which controls the blood sugar level. Has a secretagogue action over the amylase released from the midgut gland. May act as a stress hormone and may be involved in the control of molting and reproduction. The chain is Crustacean hyperglycemic hormones from Penaeus vannamei (Whiteleg shrimp).